Consider the following 302-residue polypeptide: Protein KTI12 homolog (302 aa).

Residue 8–15 (GQPCSGKS) coordinates ATP. The interval 260–273 (LRRTFVKLMGQSSL) is calmodulin-binding.

The protein belongs to the KTI12 family. Interacts with the elongator complex. Binds to calmodulin in a calcium-dependent manner. As to expression, expressed in roots, hypocotyls, cotyledons, shoot apices, stems, inflorescence apices, leaves and flowers.

The protein localises to the cytoplasm. The protein resides in the nucleus. Functionally, elongator complex-associated factor that is not a structural subunit but rather transiently contacts the complex. Regulates both meristem activity and organ growth; acts as a positive regulator of adaxial leaf patterning by modulating both cell division and differentiation. Required for an early step in synthesis of 5-carbamoylmethyl (ncm5) groups present on uridines (ncm5U) at the wobble position in tRNA. This is Protein KTI12 homolog from Arabidopsis thaliana (Mouse-ear cress).